Here is a 109-residue protein sequence, read N- to C-terminus: Small ribosomal subunit protein uS17A (109 aa).

It belongs to the universal ribosomal protein uS17 family. As to quaternary structure, part of the 30S ribosomal subunit.

Its function is as follows. One of the primary rRNA binding proteins, it binds specifically to the 5'-end of 16S ribosomal RNA. This is Small ribosomal subunit protein uS17A from Methanosarcina acetivorans (strain ATCC 35395 / DSM 2834 / JCM 12185 / C2A).